We begin with the raw amino-acid sequence, 1306 residues long: Receptor-type tyrosine-protein phosphatase C (1306 aa).

An N-terminal signal peptide occupies residues 1 to 25 (MTMYLWLKLLAFGFAFLDTEVFVTG). Over 26–577 (QSPTPSPTGL…LHHSTSYNSK (552 aa)) the chain is Extracellular. Residues 28–163 (PTPSPTGLTT…TASTFPTDPV (136 aa)) are disordered. Composition is skewed to polar residues over residues 52–61 (THTTAFSPAS) and 70–131 (SETT…SGSA). N-linked (GlcNAc...) asparagine glycosylation is found at Asn80, Asn92, Asn97, Asn186, Asn192, Asn199, Asn234, Asn262, Asn272, and Asn278. N-linked (GlcNAc...) asparagine; atypical glycosylation is present at Asn286. 6 N-linked (GlcNAc...) asparagine glycosylation sites follow: Asn337, Asn380, Asn421, Asn470, Asn490, and Asn531. 2 Fibronectin type-III domains span residues 391–483 (SPGE…TKSA) and 484–576 (PPSQ…SYNS). The chain crosses the membrane as a helical span at residues 578-598 (ALIAFLAFLIIVTSIALLVVL). The Cytoplasmic portion of the chain corresponds to 599–1306 (YKIYDLHKKR…PASPALNQGS (708 aa)). 2 consecutive Tyrosine-protein phosphatase domains span residues 653–912 (FLAE…LVEY) and 944–1228 (LEAE…IAST). Tyr683 is subject to Phosphotyrosine. Substrate contacts are provided by residues Asp821, 853–859 (CSAGVGR), and Gln897. Residue Cys853 is the Phosphocysteine intermediate of the active site. Ser975, Ser994, Ser997, Ser1001, Ser1004, Ser1005, and Ser1009 each carry phosphoserine. The tract at residues 993–1014 (MSKESEHDSDESSDDDSDSEEP) is disordered. Over residues 999–1012 (HDSDESSDDDSDSE) the composition is skewed to acidic residues. Cys1169 acts as the Phosphocysteine intermediate in catalysis. Positions 1261–1306 (CVNPLGAPEKLPEAKEQAEGSEPTSGTEGPEHSVNGPASPALNQGS) are disordered. Phosphoserine is present on Ser1299.

The protein belongs to the protein-tyrosine phosphatase family. Receptor class 1/6 subfamily. In terms of assembly, binds GANAB and PRKCSH. Interacts with SKAP1. Interacts with DPP4; the interaction is enhanced in an interleukin-12-dependent manner in activated lymphocytes. Interacts with CD53; this interaction stabilizes PTPRC on the membrane and is required for optimal phosphatase activity. Interacts with CLEC10A. As to quaternary structure, does not interact with CLEC10A. In terms of assembly, (Microbial infection) Interacts with human cytomegalovirus protein UL11; the interaction is required for binding of UL11 to T-cells. Heavily N- and O-glycosylated. As to expression, isoform 1: Detected in thymocytes. Isoform 2: Detected in thymocytes. Isoform 3: Detected in thymocytes. Isoform 4: Not detected in thymocytes. Isoform 5: Detected in thymocytes. Isoform 6: Not detected in thymocytes. Isoform 7: Detected in thymocytes. Isoform 8: Not detected in thymocytes.

The protein localises to the cell membrane. The protein resides in the membrane raft. It localises to the synapse. The catalysed reaction is O-phospho-L-tyrosyl-[protein] + H2O = L-tyrosyl-[protein] + phosphate. Protein tyrosine-protein phosphatase required for T-cell activation through the antigen receptor. Acts as a positive regulator of T-cell coactivation upon binding to DPP4. The first PTPase domain has enzymatic activity, while the second one seems to affect the substrate specificity of the first one. Upon T-cell activation, recruits and dephosphorylates SKAP1 and FYN. Dephosphorylates LYN, and thereby modulates LYN activity. Interacts with CLEC10A at antigen presenting cell-T cell contact; CLEC10A on immature dendritic cells recognizes Tn antigen-carrying PTPRC/CD45 receptor on effector T cells and modulates T cell activation threshold to limit autoreactivity. Functionally, (Microbial infection) Acts as a receptor for human cytomegalovirus protein UL11 and mediates binding of UL11 to T-cells, leading to reduced induction of tyrosine phosphorylation of multiple signaling proteins upon T-cell receptor stimulation and impaired T-cell proliferation. The chain is Receptor-type tyrosine-protein phosphatase C from Homo sapiens (Human).